We begin with the raw amino-acid sequence, 78 residues long: MSDIAERVKKIVIDHLGVDADKVVEGASFIDDLGADSLDTVELVMAFEEEFGVEIPDDAADSILTVGDAVKFIEKAQA.

In terms of domain architecture, Carrier spans 2 to 77; that stretch reads SDIAERVKKI…DAVKFIEKAQ (76 aa). Ser37 carries the O-(pantetheine 4'-phosphoryl)serine modification.

The protein belongs to the acyl carrier protein (ACP) family. In terms of processing, 4'-phosphopantetheine is transferred from CoA to a specific serine of apo-ACP by AcpS. This modification is essential for activity because fatty acids are bound in thioester linkage to the sulfhydryl of the prosthetic group.

The protein localises to the cytoplasm. It functions in the pathway lipid metabolism; fatty acid biosynthesis. In terms of biological role, carrier of the growing fatty acid chain in fatty acid biosynthesis. The protein is Acyl carrier protein AcpP of Agrobacterium fabrum (strain C58 / ATCC 33970) (Agrobacterium tumefaciens (strain C58)).